The sequence spans 1057 residues: Probable E3 ubiquitin-protein ligase HERC4 (1057 aa).

RCC1 repeat units follow at residues 1 to 51 (MLCW…FVLD), 52 to 101 (DGTV…ALND), 102 to 154 (KGQV…ALSK), 156 to 207 (SEVF…VLTL), 208 to 259 (SGAI…ALTK), 261 to 311 (GGVF…AFVP), and 313 to 366 (SGRI…CVKR). Positions 730 to 1057 (KNIDYKKPLK…IDHNEGFSLI (328 aa)) constitute an HECT domain. The Glycyl thioester intermediate role is filled by Cys1025.

Ubiquitously expressed, highest expression is found in testis during spermiogenesis. It is specifically found in spermatogonia, spermatocytes, and spermatids with little or no expression detectable in the spermatozoa, or interstitial cells.

The protein localises to the cytoplasm. It is found in the cytosol. The catalysed reaction is S-ubiquitinyl-[E2 ubiquitin-conjugating enzyme]-L-cysteine + [acceptor protein]-L-lysine = [E2 ubiquitin-conjugating enzyme]-L-cysteine + N(6)-ubiquitinyl-[acceptor protein]-L-lysine.. Its pathway is protein modification; protein ubiquitination. In terms of biological role, probable E3 ubiquitin-protein ligase involved in either protein trafficking or in the distribution of cellular structures. Required for spermatozoon maturation and fertility, and for the removal of the cytoplasmic droplet of the spermatozoon. E3 ubiquitin-protein ligases accept ubiquitin from an E2 ubiquitin-conjugating enzyme in the form of a thioester and then directly transfer it to targeted substrates. This chain is Probable E3 ubiquitin-protein ligase HERC4 (Herc4), found in Mus musculus (Mouse).